Consider the following 380-residue polypeptide: Cobalt-precorrin-5B C(1)-methyltransferase (380 aa).

The protein belongs to the CbiD family.

The catalysed reaction is Co-precorrin-5B + S-adenosyl-L-methionine = Co-precorrin-6A + S-adenosyl-L-homocysteine. Its pathway is cofactor biosynthesis; adenosylcobalamin biosynthesis; cob(II)yrinate a,c-diamide from sirohydrochlorin (anaerobic route): step 6/10. Its function is as follows. Catalyzes the methylation of C-1 in cobalt-precorrin-5B to form cobalt-precorrin-6A. The chain is Cobalt-precorrin-5B C(1)-methyltransferase from Salinispora tropica (strain ATCC BAA-916 / DSM 44818 / JCM 13857 / NBRC 105044 / CNB-440).